Consider the following 174-residue polypeptide: Large ribosomal subunit protein uL18 (174 aa).

Belongs to the universal ribosomal protein uL18 family. In terms of assembly, part of the 50S ribosomal subunit. Contacts the 5S and 23S rRNAs.

Functionally, this is one of the proteins that bind and probably mediate the attachment of the 5S RNA into the large ribosomal subunit, where it forms part of the central protuberance. This is Large ribosomal subunit protein uL18 from Methanosarcina mazei (strain ATCC BAA-159 / DSM 3647 / Goe1 / Go1 / JCM 11833 / OCM 88) (Methanosarcina frisia).